The sequence spans 149 residues: General odorant-binding protein 99b (149 aa).

Residues 1 to 16 (MKVLIVLLLGLAFVLA) form the signal peptide. Cystine bridges form between C40–C71, C67–C125, and C114–C134.

This sequence belongs to the PBP/GOBP family. Expressed in adult olfactory system. Expressed in subsets of sensilla in both olfactory organs, the maxillary palps, and third antennal segments.

The protein resides in the secreted. Functionally, present in the aqueous fluid surrounding olfactory sensory dendrites and are thought to aid in the capture and transport of hydrophobic odorants into and through this fluid. The chain is General odorant-binding protein 99b (Obp99b) from Drosophila melanogaster (Fruit fly).